Here is a 507-residue protein sequence, read N- to C-terminus: UDP-glycosyltransferase 73D1 (507 aa).

Residues Ser298, Ser359–Gln361, His376–Glu384, and Phe398–Gln401 contribute to the UDP-alpha-D-glucose site.

This sequence belongs to the UDP-glycosyltransferase family.

The protein is UDP-glycosyltransferase 73D1 (UGT73D1) of Arabidopsis thaliana (Mouse-ear cress).